The sequence spans 125 residues: Acyl carrier protein, mitochondrial (125 aa).

A mitochondrion-targeting transit peptide spans 1 to 36; it reads MFRSVCRISSRVAPSAYRTIMGRSVMSNTILAQRFY. One can recognise a Carrier domain in the interval 43–122; it reads DQVSQRVIDV…ETVDYIASNP (80 aa). Ser-82 is modified (O-(pantetheine 4'-phosphoryl)serine).

Belongs to the acyl carrier protein (ACP) family. Complex I is composed of about 30 different subunits. In terms of processing, 4'-phosphopantetheine is transferred from CoA to a specific serine of apo-ACP by acpS. This modification is essential for activity because fatty acids are bound in thioester linkage to the sulfhydryl of the prosthetic group.

Its subcellular location is the mitochondrion. The protein operates within lipid metabolism; fatty acid biosynthesis. Carrier of the growing fatty acid chain in fatty acid biosynthesis. May be involved in the synthesis of very-long-chain fatty acids. Accessory and non-catalytic subunit of the mitochondrial membrane respiratory chain NADH dehydrogenase (Complex I), which functions in the transfer of electrons from NADH to the respiratory chain. In Saccharomyces cerevisiae (strain ATCC 204508 / S288c) (Baker's yeast), this protein is Acyl carrier protein, mitochondrial (ACP1).